The primary structure comprises 302 residues: Sulfate adenylyltransferase subunit 2 (302 aa).

This sequence belongs to the PAPS reductase family. CysD subfamily. Heterodimer composed of CysD, the smaller subunit, and CysN.

The enzyme catalyses sulfate + ATP + H(+) = adenosine 5'-phosphosulfate + diphosphate. The protein operates within sulfur metabolism; hydrogen sulfide biosynthesis; sulfite from sulfate: step 1/3. With CysN forms the ATP sulfurylase (ATPS) that catalyzes the adenylation of sulfate producing adenosine 5'-phosphosulfate (APS) and diphosphate, the first enzymatic step in sulfur assimilation pathway. APS synthesis involves the formation of a high-energy phosphoric-sulfuric acid anhydride bond driven by GTP hydrolysis by CysN coupled to ATP hydrolysis by CysD. In Salmonella schwarzengrund (strain CVM19633), this protein is Sulfate adenylyltransferase subunit 2.